The primary structure comprises 85 residues: UPF0512 protein R (85 aa).

The protein belongs to the UPF0512 family.

The chain is UPF0512 protein R from Dictyostelium discoideum (Social amoeba).